Reading from the N-terminus, the 410-residue chain is MWTGWWLWPLVAVCTADQFRDNAVRLMQSTPVIDGHNDLPWQLLKRFNNQLQDPRANLTSLNGTHTNIPKLKAGFVGAQFWSAYTPCDTQNKDSVKRTLEQIDVIQRMCQLYPETFLCVTDSAGIQQAFQEGKVASLVGVEGGHSIDSSLGVLRALYHLGMRYLTLTHSCNTPWADNWLVDTGEDEAQSQGLSSFGQSVVKEMNRLGVIIDLAHVSVATMEAALQLSKAPVIFSHSSAYSVCRHRRNVPDHVLQLVKQTGSLVMVNFYNDYVSCKAEANLSQVADHLDYIKKVAGAGAVGFGGDYDGVSRLPSGLEDVSKYPDLVAELLRRQWTEEEVRGALAENLLRVFKAVEQASDHKQAPGEEPIPLGQLEASCRTNYGYSGAPSLHLQPGTLLASLVTLLLSLCLL.

The signal sequence occupies residues 1–16; sequence MWTGWWLWPLVAVCTA. The Zn(2+) site is built by H36 and D38. N-linked (GlcNAc...) asparagine glycosylation is found at N57 and N62. An intrachain disulfide couples C87 to C170. A Zn(2+)-binding site is contributed by E141. H168 contributes to the substrate binding site. Zn(2+) contacts are provided by H214 and H235. C242 and C274 are disulfide-bonded. Substrate is bound at residue R246. An N-linked (GlcNAc...) asparagine glycan is attached at N279. D304 is a substrate binding site. A lipid anchor (GPI-anchor amidated serine) is attached at S384. A propeptide spans 385–410 (removed in mature form); sequence GAPSLHLQPGTLLASLVTLLLSLCLL.

The protein belongs to the metallo-dependent hydrolases superfamily. Peptidase M19 family. In terms of assembly, homodimer; disulfide-linked. Zn(2+) serves as cofactor.

The protein resides in the apical cell membrane. It catalyses the reaction an L-aminoacyl-L-amino acid + H2O = 2 an L-alpha-amino acid. It carries out the reaction leukotriene D4 + H2O = leukotriene E4 + glycine. The catalysed reaction is L-cystine-bis-glycine + 2 H2O = L-cystine + 2 glycine. The enzyme catalyses a beta-lactam + H2O = a substituted beta-amino acid. It catalyses the reaction glycyldehydrophenylalanine + H2O = 2,3-didehydrophenylalanine + glycine. Inhibited by L-penicillamine. Inhibited by cilastatin. In terms of biological role, hydrolyzes a wide range of dipeptides including the conversion of leukotriene D4 to leukotriene E4. Hydrolyzes cystinyl-bis-glycine (cys-bis-gly) formed during glutathione degradation. Also possesses beta lactamase activity and hydrolytically inactivates beta-lactam antibiotics. Independently of its dipeptidase activity, acts as an adhesion receptor for neutrophil recruitment from bloodstream into inflamed lungs and liver. This Bos taurus (Bovine) protein is Dipeptidase 1 (DPEP1).